The following is a 173-amino-acid chain: Adenine phosphoribosyltransferase (173 aa).

It belongs to the purine/pyrimidine phosphoribosyltransferase family. As to quaternary structure, homodimer.

It is found in the cytoplasm. It catalyses the reaction AMP + diphosphate = 5-phospho-alpha-D-ribose 1-diphosphate + adenine. Its pathway is purine metabolism; AMP biosynthesis via salvage pathway; AMP from adenine: step 1/1. Catalyzes a salvage reaction resulting in the formation of AMP, that is energically less costly than de novo synthesis. This Chloroflexus aurantiacus (strain ATCC 29366 / DSM 635 / J-10-fl) protein is Adenine phosphoribosyltransferase.